We begin with the raw amino-acid sequence, 838 residues long: Probable glucan 1,3-beta-glucosidase D (838 aa).

Positions 1-23 (MPSHSRSRDRYRGRDESEPERDR) are enriched in basic and acidic residues. A disordered region spans residues 1–298 (MPSHSRSRDR…GASDSDMDGA (298 aa)). Topologically, residues 1 to 310 (MPSHSRSRDR…GTPFWKKKKT (310 aa)) are cytoplasmic. Residues 35-45 (DYEDDELDDDD) are compositionally biased toward acidic residues. Composition is skewed to basic and acidic residues over residues 111-124 (DSPRRRDRHRDGDR), 149-164 (SRDDRRERAYESEREA), 200-221 (AKLRSEYDKEDRSRAKADAKAE), and 234-246 (QPRRLDPFPEETP). A helical; Signal-anchor for type II membrane protein transmembrane segment spans residues 311 to 331 (WIAVGVVVVLLAIIIPVAVVV). Residues 332–838 (SKKNNEKKSD…PDFGDLPENY (507 aa)) lie on the Extracellular side of the membrane. The segment at 335 to 359 (NNEKKSDSTTDDTTPRNSNLDGISR) is disordered. N-linked (GlcNAc...) asparagine glycosylation is found at Asn-383, Asn-388, Asn-400, Asn-553, and Asn-565. Catalysis depends on Glu-604, which acts as the Proton donor. N-linked (GlcNAc...) asparagine glycans are attached at residues Asn-643 and Asn-696. Glu-709 acts as the Nucleophile in catalysis.

Belongs to the glycosyl hydrolase 5 (cellulase A) family.

The protein localises to the cell membrane. It catalyses the reaction Successive hydrolysis of beta-D-glucose units from the non-reducing ends of (1-&gt;3)-beta-D-glucans, releasing alpha-glucose.. Its function is as follows. Glucosidase involved in the degradation of cellulosic biomass. Active on lichenan. The sequence is that of Probable glucan 1,3-beta-glucosidase D (exgD) from Aspergillus terreus (strain NIH 2624 / FGSC A1156).